The primary structure comprises 405 residues: L-carnitine CoA-transferase (405 aa).

K97 and R104 together coordinate CoA. D169 acts as the Nucleophile in catalysis.

It belongs to the CoA-transferase III family. CaiB subfamily. As to quaternary structure, homodimer.

Its subcellular location is the cytoplasm. The enzyme catalyses crotonobetainyl-CoA + (R)-carnitine = crotonobetaine + (R)-carnitinyl-CoA. The catalysed reaction is 4-(trimethylamino)butanoyl-CoA + (R)-carnitine = (R)-carnitinyl-CoA + 4-(trimethylamino)butanoate. It participates in amine and polyamine metabolism; carnitine metabolism. Catalyzes the reversible transfer of the CoA moiety from gamma-butyrobetainyl-CoA to L-carnitine to generate L-carnitinyl-CoA and gamma-butyrobetaine. Is also able to catalyze the reversible transfer of the CoA moiety from gamma-butyrobetainyl-CoA or L-carnitinyl-CoA to crotonobetaine to generate crotonobetainyl-CoA. This is L-carnitine CoA-transferase from Salmonella gallinarum (strain 287/91 / NCTC 13346).